A 233-amino-acid chain; its full sequence is Outer membrane protein MIP (233 aa).

The N-terminal stretch at 1–20 is a signal peptide; the sequence is MKMKLVTAAVMGLAMSTAMA. Residues 144 to 233 enclose the PPIase FKBP-type domain; sequence SDTVTVEYTG…IHLISVKKSS (90 aa).

Belongs to the FKBP-type PPIase family.

The protein localises to the cell outer membrane. The enzyme catalyses [protein]-peptidylproline (omega=180) = [protein]-peptidylproline (omega=0). Its activity is regulated as follows. Strongly inhibited by FK506 but is completely resistant to cyclosporin A. In terms of biological role, essential virulence factor associated with macrophage infectivity. Exhibits PPIase activity. The polypeptide is Outer membrane protein MIP (mip) (Legionella pneumophila subsp. pneumophila (strain Philadelphia 1 / ATCC 33152 / DSM 7513)).